The primary structure comprises 327 residues: Methionyl-tRNA formyltransferase (327 aa).

113-116 (SILP) contacts (6S)-5,6,7,8-tetrahydrofolate.

It belongs to the Fmt family.

The catalysed reaction is L-methionyl-tRNA(fMet) + (6R)-10-formyltetrahydrofolate = N-formyl-L-methionyl-tRNA(fMet) + (6S)-5,6,7,8-tetrahydrofolate + H(+). Its function is as follows. Attaches a formyl group to the free amino group of methionyl-tRNA(fMet). The formyl group appears to play a dual role in the initiator identity of N-formylmethionyl-tRNA by promoting its recognition by IF2 and preventing the misappropriation of this tRNA by the elongation apparatus. The chain is Methionyl-tRNA formyltransferase from Colwellia psychrerythraea (strain 34H / ATCC BAA-681) (Vibrio psychroerythus).